Here is a 269-residue protein sequence, read N- to C-terminus: Phosphatidylglycerol--prolipoprotein diacylglyceryl transferase (269 aa).

A run of 7 helical transmembrane segments spans residues 17 to 37 (LKIH…WLLA), 56 to 76 (LVFW…VLFY), 92 to 112 (WKGG…ALWF), 120 to 140 (FFEL…AGRI), 174 to 194 (PSQL…LWLY), 202 to 222 (MAVS…VEFV), and 237 to 257 (LTMG…LIWL). Arginine 139 provides a ligand contact to a 1,2-diacyl-sn-glycero-3-phospho-(1'-sn-glycerol).

It belongs to the Lgt family.

It localises to the cell inner membrane. The enzyme catalyses L-cysteinyl-[prolipoprotein] + a 1,2-diacyl-sn-glycero-3-phospho-(1'-sn-glycerol) = an S-1,2-diacyl-sn-glyceryl-L-cysteinyl-[prolipoprotein] + sn-glycerol 1-phosphate + H(+). Its pathway is protein modification; lipoprotein biosynthesis (diacylglyceryl transfer). Its function is as follows. Catalyzes the transfer of the diacylglyceryl group from phosphatidylglycerol to the sulfhydryl group of the N-terminal cysteine of a prolipoprotein, the first step in the formation of mature lipoproteins. This is Phosphatidylglycerol--prolipoprotein diacylglyceryl transferase from Pseudomonas entomophila (strain L48).